A 517-amino-acid polypeptide reads, in one-letter code: MDIIGGQHLRQMWDDLADVYGHKTALICESSSGVVNRYSYLELNQEINRTANLFYTLGIRKGDKVALHLDNCPEFIFCWFGLAKIGAIMVPINARLLREESTWILQNSQACLLVTSAQFYPMYQQIQQEDATQLRHICLTDVSLPADDGVSSFTQLKNQQPATLCYAPPLSTDDTAEILFTSGTTSRPKGVVITHYNLRFAGYYSAWQCALRDDDVYLTVMPAFHIDCQCTAAMAAFSTGATFVLVEKYSARAFWGQVQKYRATITECIPMMIRTLMVQPLSANDQQHRLREVMFYLNLSEQEKDAFCERFGVRLLTSYGMTETIVGIIGDRPGDKRRWPSIGQAGFCYEAEIRDDHNRPLPAGEIGEICIKGVPGKTIFKEYFLNPKATAKVLEADGWLHTGDTGYRDEEGFFYFVDRRCNMIKRGGENVSCVELENIIATHPKIQDIVVVGIKDSIRDEAIKAFVVLNEGETLSEEEFFCFCEQNMAKFKVLSYLEIRKDLPRNCSGKIIRKNLK.

The protein belongs to the ATP-dependent AMP-binding enzyme family.

It carries out the reaction 4-(trimethylamino)butanoate + ATP + CoA = 4-(trimethylamino)butanoyl-CoA + AMP + diphosphate. The catalysed reaction is crotonobetaine + ATP + CoA = crotonobetainyl-CoA + AMP + diphosphate. It catalyses the reaction (R)-carnitine + ATP + CoA = (R)-carnitinyl-CoA + AMP + diphosphate. Its pathway is amine and polyamine metabolism; carnitine metabolism. Functionally, catalyzes the transfer of CoA to carnitine, generating the initial carnitinyl-CoA needed for the CaiB reaction cycle. Also has activity toward crotonobetaine and gamma-butyrobetaine. The polypeptide is Crotonobetaine/carnitine--CoA ligase (Escherichia coli O127:H6 (strain E2348/69 / EPEC)).